The following is a 545-amino-acid chain: 2-succinyl-5-enolpyruvyl-6-hydroxy-3-cyclohexene-1-carboxylate synthase (545 aa).

Positions 184-209 are disordered; sequence PLVPDPEPHGAPTPAGRPGGRPWTYT. Positions 195–205 are enriched in low complexity; the sequence is PTPAGRPGGRP.

Belongs to the TPP enzyme family. MenD subfamily. In terms of assembly, homodimer. It depends on Mg(2+) as a cofactor. The cofactor is Mn(2+). Requires thiamine diphosphate as cofactor.

It carries out the reaction isochorismate + 2-oxoglutarate + H(+) = 5-enolpyruvoyl-6-hydroxy-2-succinyl-cyclohex-3-ene-1-carboxylate + CO2. It participates in quinol/quinone metabolism; 1,4-dihydroxy-2-naphthoate biosynthesis; 1,4-dihydroxy-2-naphthoate from chorismate: step 2/7. Its pathway is quinol/quinone metabolism; menaquinone biosynthesis. Its function is as follows. Catalyzes the thiamine diphosphate-dependent decarboxylation of 2-oxoglutarate and the subsequent addition of the resulting succinic semialdehyde-thiamine pyrophosphate anion to isochorismate to yield 2-succinyl-5-enolpyruvyl-6-hydroxy-3-cyclohexene-1-carboxylate (SEPHCHC). This is 2-succinyl-5-enolpyruvyl-6-hydroxy-3-cyclohexene-1-carboxylate synthase from Mycobacterium avium (strain 104).